Here is a 496-residue protein sequence, read N- to C-terminus: Alanine aminotransferase 1 (496 aa).

An N-acetylalanine modification is found at Ala-2. Thr-22 bears the Phosphothreonine mark. At Lys-314 the chain carries N6-(pyridoxal phosphate)lysine.

It belongs to the class-I pyridoxal-phosphate-dependent aminotransferase family. Alanine aminotransferase subfamily. As to quaternary structure, homodimer. The cofactor is pyridoxal 5'-phosphate. As to expression, liver, heart, skeletal muscle, etc.

The protein resides in the cytoplasm. The enzyme catalyses L-alanine + 2-oxoglutarate = pyruvate + L-glutamate. The protein operates within amino-acid degradation; L-alanine degradation via transaminase pathway; pyruvate from L-alanine: step 1/1. Its function is as follows. Catalyzes the reversible transamination between alanine and 2-oxoglutarate to form pyruvate and glutamate. Participates in cellular nitrogen metabolism and also in liver gluconeogenesis starting with precursors transported from skeletal muscles. The protein is Alanine aminotransferase 1 (Gpt) of Rattus norvegicus (Rat).